A 337-amino-acid polypeptide reads, in one-letter code: Holliday junction branch migration complex subunit RuvB (337 aa).

A large ATPase domain (RuvB-L) region spans residues 1 to 182 (MEDRMVSASY…FGVLSAMEFY (182 aa)). 9 residues coordinate ATP: L21, R22, G63, K66, T67, T68, R172, Y182, and R219. T67 is a Mg(2+) binding site. The tract at residues 183–253 (NEDELKEIIL…IAKNALSLLE (71 aa)) is small ATPAse domain (RuvB-S). Positions 256–337 (GEGFDKIDNK…REFKEQTKLT (82 aa)) are head domain (RuvB-H). DNA contacts are provided by R311 and R316.

Belongs to the RuvB family. Homohexamer. Forms an RuvA(8)-RuvB(12)-Holliday junction (HJ) complex. HJ DNA is sandwiched between 2 RuvA tetramers; dsDNA enters through RuvA and exits via RuvB. An RuvB hexamer assembles on each DNA strand where it exits the tetramer. Each RuvB hexamer is contacted by two RuvA subunits (via domain III) on 2 adjacent RuvB subunits; this complex drives branch migration. In the full resolvosome a probable DNA-RuvA(4)-RuvB(12)-RuvC(2) complex forms which resolves the HJ.

It is found in the cytoplasm. The enzyme catalyses ATP + H2O = ADP + phosphate + H(+). Its function is as follows. The RuvA-RuvB-RuvC complex processes Holliday junction (HJ) DNA during genetic recombination and DNA repair, while the RuvA-RuvB complex plays an important role in the rescue of blocked DNA replication forks via replication fork reversal (RFR). RuvA specifically binds to HJ cruciform DNA, conferring on it an open structure. The RuvB hexamer acts as an ATP-dependent pump, pulling dsDNA into and through the RuvAB complex. RuvB forms 2 homohexamers on either side of HJ DNA bound by 1 or 2 RuvA tetramers; 4 subunits per hexamer contact DNA at a time. Coordinated motions by a converter formed by DNA-disengaged RuvB subunits stimulates ATP hydrolysis and nucleotide exchange. Immobilization of the converter enables RuvB to convert the ATP-contained energy into a lever motion, pulling 2 nucleotides of DNA out of the RuvA tetramer per ATP hydrolyzed, thus driving DNA branch migration. The RuvB motors rotate together with the DNA substrate, which together with the progressing nucleotide cycle form the mechanistic basis for DNA recombination by continuous HJ branch migration. Branch migration allows RuvC to scan DNA until it finds its consensus sequence, where it cleaves and resolves cruciform DNA. In Clostridium novyi (strain NT), this protein is Holliday junction branch migration complex subunit RuvB.